We begin with the raw amino-acid sequence, 259 residues long: Glutamate racemase (259 aa).

Residues 12–13 (DS) and 44–45 (YG) each bind substrate. The Proton donor/acceptor role is filled by Cys-75. Substrate is bound at residue 76 to 77 (NT). The active-site Proton donor/acceptor is the Cys-186. Position 187–188 (187–188 (TH)) interacts with substrate.

This sequence belongs to the aspartate/glutamate racemases family.

The catalysed reaction is L-glutamate = D-glutamate. The protein operates within cell wall biogenesis; peptidoglycan biosynthesis. Functionally, provides the (R)-glutamate required for cell wall biosynthesis. In Clostridium novyi (strain NT), this protein is Glutamate racemase.